We begin with the raw amino-acid sequence, 1482 residues long: Chromosome partition protein MukB (1482 aa).

ATP is bound at residue 34–41 (GGNGAGKS). Coiled-coil stretches lie at residues 326–472 (LEAD…QTAH), 507–602 (NQRH…RRAP), 780–805 (RAAR…ATLS), 832–1110 (DDPE…REQV), and 1209–1265 (VEAI…LQSV). Residues 666-783 (PGGSEDPRLN…SLPLFGRAAR (118 aa)) form a flexible hinge region.

The protein belongs to the SMC family. MukB subfamily. As to quaternary structure, homodimerization via its hinge domain. Binds to DNA via its C-terminal region. Interacts, and probably forms a ternary complex, with MukE and MukF via its C-terminal region. The complex formation is stimulated by calcium or magnesium. Interacts with tubulin-related protein FtsZ.

Its subcellular location is the cytoplasm. It localises to the nucleoid. Its function is as follows. Plays a central role in chromosome condensation, segregation and cell cycle progression. Functions as a homodimer, which is essential for chromosome partition. Involved in negative DNA supercoiling in vivo, and by this means organize and compact chromosomes. May achieve or facilitate chromosome segregation by condensation DNA from both sides of a centrally located replisome during cell division. This Klebsiella pneumoniae subsp. pneumoniae (strain ATCC 700721 / MGH 78578) protein is Chromosome partition protein MukB.